We begin with the raw amino-acid sequence, 934 residues long: Serine/threonine-protein kinase PknD (934 aa).

The 293-residue stretch at 4–296 (YELIRLIGKG…ELRQALQPYL (293 aa)) folds into the Protein kinase domain. ATP contacts are provided by residues 10–18 (IGKGGMGEV) and lysine 33. The active-site Proton acceptor is the aspartate 138.

The protein belongs to the protein kinase superfamily. Ser/Thr protein kinase family. Interacts with Pkn1. Autophosphorylated on serine and threonine residues. Present in elementary bodies 40 hours post-infection as 2 bands of approximately 55 to 60 and 45 to 50 kDa, which may be due to differential phosphorylation as well as degradation; an enzymatically active full-length protein can also be detected.

The enzyme catalyses L-seryl-[protein] + ATP = O-phospho-L-seryl-[protein] + ADP + H(+). It carries out the reaction L-threonyl-[protein] + ATP = O-phospho-L-threonyl-[protein] + ADP + H(+). Together with the serine/threonine kinase Pkn1, may play a role in the specific interactions with host proteins during intracellular growth. Autophosphorylates and also phosphorylates Pkn1. This is Serine/threonine-protein kinase PknD from Chlamydia trachomatis serovar L2 (strain ATCC VR-902B / DSM 19102 / 434/Bu).